The following is a 633-amino-acid chain: DEAD-box ATP-dependent RNA helicase 37 (633 aa).

The disordered stretch occupies residues 1–110 (MSASWADVAD…WNNRSGGWDR (110 aa)). Ser-2 is subject to N-acetylserine. Positions 11–25 (SENTGSGSSNQNSHP) are enriched in polar residues. Composition is skewed to gly residues over residues 68–80 (GGSGVGVGGGGGY) and 87–101 (PGSGSGYGGRGGGGW). The Q motif motif lies at 159–187 (NTFAEIDLGEALNLNIRRCKYVKPTPVQR). The Helicase ATP-binding domain maps to 190-374 (IPILLEGRDL…ADFLANYIFL (185 aa)). ATP is bound at residue 203-210 (AQTGSGKT). A DEAD box motif is present at residues 318–321 (DEAD). The Helicase C-terminal domain maps to 401 to 552 (HLMDLLHAQR…EVPEWLTRYA (152 aa)). The disordered stretch occupies residues 555–600 (SSFGGGKNRRSGGRFGGRDFRREGSFGSGRGGYGGGGGGYGGGGGY). Residues 580-600 (FGSGRGGYGGGGGGYGGGGGY) are compositionally biased toward gly residues.

The protein belongs to the DEAD box helicase family. DDX3/DED1 subfamily.

The enzyme catalyses ATP + H2O = ADP + phosphate + H(+). In Arabidopsis thaliana (Mouse-ear cress), this protein is DEAD-box ATP-dependent RNA helicase 37 (RH37).